We begin with the raw amino-acid sequence, 152 residues long: Transcriptional regulator MraZ (152 aa).

SpoVT-AbrB domains are found at residues 5 to 52 (ATMV…PLPE) and 81 to 124 (ASEC…DEQT).

Belongs to the MraZ family. As to quaternary structure, forms oligomers.

It is found in the cytoplasm. The protein resides in the nucleoid. In terms of biological role, negatively regulates its own expression and that of the subsequent genes in the proximal part of the division and cell wall (dcw) gene cluster. Acts by binding directly to DNA. May also regulate the expression of genes outside the dcw cluster. This chain is Transcriptional regulator MraZ, found in Yersinia pestis bv. Antiqua (strain Antiqua).